The primary structure comprises 122 residues: Double-headed protease inhibitor, submandibular gland (122 aa).

Kazal-like domains are found at residues glycine 10–isoleucine 70 and glutamate 71–serine 121. Intrachain disulfides connect cysteine 16/cysteine 50, cysteine 28/cysteine 47, cysteine 36/cysteine 68, cysteine 72/cysteine 101, cysteine 79/cysteine 98, and cysteine 87/cysteine 119.

The protein localises to the secreted. Its function is as follows. This inhibitor is composed of two homologous actively inhibiting halves: one which inhibits trypsin, the other which inhibits elastase. In Panthera uncia (Snow leopard), this protein is Double-headed protease inhibitor, submandibular gland.